The chain runs to 574 residues: Ribonuclease Y (574 aa).

A helical transmembrane segment spans residues 1 to 21; sequence MSLLDLVLLLLVLGLGGVLLL. Positions 264–327 constitute a KH domain; the sequence is AVTVVPIPSD…EIARMALEEL (64 aa). The region spanning 390 to 483 is the HD domain; the sequence is VLKHSIQVAH…VAAADALSAA (94 aa).

Belongs to the RNase Y family.

It is found in the cell membrane. Functionally, endoribonuclease that initiates mRNA decay. The chain is Ribonuclease Y from Thermus thermophilus (strain ATCC 27634 / DSM 579 / HB8).